Reading from the N-terminus, the 210-residue chain is Pyridoxine/pyridoxamine 5'-phosphate oxidase (210 aa).

Substrate contacts are provided by residues 7 to 10 (RQSY) and Lys65. FMN contacts are provided by residues 60-65 (RIVLIK), 75-76 (FT), Arg81, Lys82, and Gln104. Substrate-binding residues include Tyr122, Arg126, and Ser130. Residues 139–140 (QS) and Trp182 contribute to the FMN site. 188 to 190 (RLH) serves as a coordination point for substrate. An FMN-binding site is contributed by Arg192.

This sequence belongs to the pyridoxamine 5'-phosphate oxidase family. Homodimer. Requires FMN as cofactor.

It catalyses the reaction pyridoxamine 5'-phosphate + O2 + H2O = pyridoxal 5'-phosphate + H2O2 + NH4(+). The catalysed reaction is pyridoxine 5'-phosphate + O2 = pyridoxal 5'-phosphate + H2O2. The protein operates within cofactor metabolism; pyridoxal 5'-phosphate salvage; pyridoxal 5'-phosphate from pyridoxamine 5'-phosphate: step 1/1. It participates in cofactor metabolism; pyridoxal 5'-phosphate salvage; pyridoxal 5'-phosphate from pyridoxine 5'-phosphate: step 1/1. Its function is as follows. Catalyzes the oxidation of either pyridoxine 5'-phosphate (PNP) or pyridoxamine 5'-phosphate (PMP) into pyridoxal 5'-phosphate (PLP). This chain is Pyridoxine/pyridoxamine 5'-phosphate oxidase, found in Bordetella avium (strain 197N).